Here is a 111-residue protein sequence, read N- to C-terminus: Universal stress protein B (111 aa).

A run of 2 helical transmembrane segments spans residues 1–21 (MFST…NMMR) and 90–110 (FILT…MLIW).

It belongs to the universal stress protein B family.

It is found in the cell inner membrane. The chain is Universal stress protein B from Photorhabdus laumondii subsp. laumondii (strain DSM 15139 / CIP 105565 / TT01) (Photorhabdus luminescens subsp. laumondii).